A 1305-amino-acid chain; its full sequence is RNA-directed RNA polymerase (1305 aa).

A RdRp catalytic domain is found at 563–814; the sequence is IIVGDLEATG…KTLIAPFSVE (252 aa).

This sequence belongs to the reoviridae RNA-directed RNA polymerase family.

The catalysed reaction is RNA(n) + a ribonucleoside 5'-triphosphate = RNA(n+1) + diphosphate. The chain is RNA-directed RNA polymerase (Segment-1) from African horse sickness virus (AHSV).